The chain runs to 347 residues: Oocyte-specific homeobox protein 6 (347 aa).

Disordered stretches follow at residues 1–20 and 54–86; these read MLQYNQSPHMPQDPSLHSKF and PRSPMQSSHSVPERDLCPQESQGPSGKSSIQMQ. Polar residues predominate over residues 72–85; it reads QESQGPSGKSSIQM. Residues 145 to 204 constitute a DNA-binding region (homeobox); the sequence is HRKIRTVYTEEQKCVLKKHFHKCTYPSREQRMALAVLVGVTANEIQIWFKNHRAKSKRES.

It belongs to the paired homeobox family. Obox subfamily. Specifically expressed in early embryos.

The protein resides in the nucleus. Functionally, transcription factor required for zygotic genome activation (ZGA), a critical event in early embryonic development during which the developmental control passes from maternally provided mRNAs to the expression of the zygotic genome after fertilization. This chain is Oocyte-specific homeobox protein 6, found in Mus musculus (Mouse).